Here is a 170-residue protein sequence, read N- to C-terminus: RNA pyrophosphohydrolase (170 aa).

The region spanning 6-149 (GFRPNVGIVI…KRDVYRRALK (144 aa)) is the Nudix hydrolase domain. The Nudix box signature appears at 38 to 59 (GGIDDGETPEQAMYRELYEEVG).

Belongs to the Nudix hydrolase family. RppH subfamily. A divalent metal cation serves as cofactor.

Its function is as follows. Accelerates the degradation of transcripts by removing pyrophosphate from the 5'-end of triphosphorylated RNA, leading to a more labile monophosphorylated state that can stimulate subsequent ribonuclease cleavage. The protein is RNA pyrophosphohydrolase of Aliivibrio salmonicida (strain LFI1238) (Vibrio salmonicida (strain LFI1238)).